Consider the following 193-residue polypeptide: Ion-translocating oxidoreductase complex subunit A (193 aa).

Transmembrane regions (helical) follow at residues 5-25, 39-59, 72-92, 102-122, 134-154, and 171-191; these read ILLI…FLGL, IGMG…AYLV, LRTL…EMVI, LLGI…VALL, VIYG…FAAL, and SIAL…SGLV.

The protein belongs to the NqrDE/RnfAE family. The complex is composed of six subunits: RnfA, RnfB, RnfC, RnfD, RnfE and RnfG.

The protein localises to the cell inner membrane. Its function is as follows. Part of a membrane-bound complex that couples electron transfer with translocation of ions across the membrane. The polypeptide is Ion-translocating oxidoreductase complex subunit A (Histophilus somni (strain 2336) (Haemophilus somnus)).